The chain runs to 224 residues: UPF0758 protein PFLU_5982 (224 aa).

The region spanning 102-224 (VLESPKAVRD…PLSMAEYGWL (123 aa)) is the MPN domain. Positions 173, 175, and 186 each coordinate Zn(2+). The JAMM motif signature appears at 173-186 (HNHPSGSLEPSAAD).

It belongs to the UPF0758 family.

The chain is UPF0758 protein PFLU_5982 from Pseudomonas fluorescens (strain SBW25).